The chain runs to 537 residues: Tyrosine-protein kinase Fyn (537 aa).

Gly2 carries the N-myristoyl glycine lipid modification. Residues Cys3 and Cys6 are each lipidated (S-palmitoyl cysteine). Thr12 is modified (phosphothreonine; by PKC). The tract at residues 14–35 is disordered; that stretch reads LTEERDGSLNQSSGYRYGTDPT. 2 positions are modified to phosphoserine: Ser21 and Ser26. Positions 82-143 constitute an SH3 domain; the sequence is TGVTLFVALY…PSNYVAPVDS (62 aa). The region spanning 149-246 is the SH2 domain; it reads WYFGKLGRKD…GLCCRLVVPC (98 aa). Residue Tyr185 is modified to Phosphotyrosine. Residues 271–524 form the Protein kinase domain; the sequence is LQLIKRLGNG…YLQSFLEDYF (254 aa). ATP is bound by residues 277 to 285 and Lys299; that span reads LGNGQFGEV. The Proton acceptor role is filled by Asp390. Phosphotyrosine; by autocatalysis is present on Tyr420. At Tyr531 the chain carries Phosphotyrosine; by CSK.

This sequence belongs to the protein kinase superfamily. Tyr protein kinase family. SRC subfamily. Interacts (via its SH3 domain) with PIK3R1 and PRMT8. Interacts with FYB1, PAG1, and SH2D1A. Interacts with CD79A (tyrosine-phosphorylated form); the interaction increases FYN activity. Interacts (via SH2 domain) with CSF1R (tyrosine phosphorylated). Interacts with TOM1L1 (phosphorylated form). Interacts with KDR (tyrosine phosphorylated). Interacts (via SH3 domain) with KLHL2 (via N-terminus). Interacts with SH2D1A and SLAMF1. Interacts with ITCH; the interaction phosphorylates ITCH and negatively regulates its activity. Interacts with FASLG. Interacts with RUNX3. Interacts with KIT. Interacts with EPHA8; possible downstream effector of EPHA8 in regulation of cell adhesion. Interacts with PTK2/FAK1; this interaction leads to PTK2/FAK1 phosphorylation and activation. Interacts with CAV1; this interaction couples integrins to the Ras-ERK pathway. Interacts with UNC119. Interacts (via SH2 domain) with PTPRH (phosphorylated form). Interacts with PTPRO (phosphorylated form). Interacts with PTPRB (phosphorylated form). Interacts with FYB2. Interacts with DSCAM. Interacts with SKAP1 and FYB1; this interaction promotes the phosphorylation of CLNK. Interacts with NEDD9; in the presence of PTK2. In terms of assembly, (Microbial infection) Interacts (via its SH3 domain) with hepatitis E virus/HEV protein ORF3. The cofactor is Mn(2+). Autophosphorylated at Tyr-420. Phosphorylation on the C-terminal tail at Tyr-531 by CSK maintains the enzyme in an inactive state. PTPRC/CD45 dephosphorylates Tyr-531 leading to activation. Ultraviolet B (UVB) strongly increase phosphorylation at Thr-12 and kinase activity, and promotes translocation from the cytoplasm to the nucleus. Dephosphorylation at Tyr-420 by PTPN2 negatively regulates T-cell receptor signaling. Phosphorylated at tyrosine residues, which can be enhanced by NTN1. In terms of processing, palmitoylated. Palmitoylation at Cys-3 and Cys-6, probably by ZDHHC21, regulates subcellular location. In terms of tissue distribution, isoform 1 is highly expressed in the brain. Isoform 2 is expressed in cells of hemopoietic lineages, especially T-lymphocytes.

It is found in the cytoplasm. Its subcellular location is the nucleus. It localises to the cell membrane. The protein resides in the perikaryon. It catalyses the reaction L-tyrosyl-[protein] + ATP = O-phospho-L-tyrosyl-[protein] + ADP + H(+). With respect to regulation, inhibited by phosphorylation of Tyr-531 by leukocyte common antigen and activated by dephosphorylation of this site. Its function is as follows. Non-receptor tyrosine-protein kinase that plays a role in many biological processes including regulation of cell growth and survival, cell adhesion, integrin-mediated signaling, cytoskeletal remodeling, cell motility, immune response and axon guidance. Inactive FYN is phosphorylated on its C-terminal tail within the catalytic domain. Following activation by PKA, the protein subsequently associates with PTK2/FAK1, allowing PTK2/FAK1 phosphorylation, activation and targeting to focal adhesions. Involved in the regulation of cell adhesion and motility through phosphorylation of CTNNB1 (beta-catenin) and CTNND1 (delta-catenin). Regulates cytoskeletal remodeling by phosphorylating several proteins including the actin regulator WAS and the microtubule-associated proteins MAP2 and MAPT. Promotes cell survival by phosphorylating AGAP2/PIKE-A and preventing its apoptotic cleavage. Participates in signal transduction pathways that regulate the integrity of the glomerular slit diaphragm (an essential part of the glomerular filter of the kidney) by phosphorylating several slit diaphragm components including NPHS1, KIRREL1 and TRPC6. Plays a role in neural processes by phosphorylating DPYSL2, a multifunctional adapter protein within the central nervous system, ARHGAP32, a regulator for Rho family GTPases implicated in various neural functions, and SNCA, a small pre-synaptic protein. Involved in reelin signaling by mediating phosphorylation of DAB1 following reelin (RELN)-binding to its receptor. Participates in the downstream signaling pathways that lead to T-cell differentiation and proliferation following T-cell receptor (TCR) stimulation. Phosphorylates PTK2B/PYK2 in response to T-cell receptor activation. Also participates in negative feedback regulation of TCR signaling through phosphorylation of PAG1, thereby promoting interaction between PAG1 and CSK and recruitment of CSK to lipid rafts. CSK maintains LCK and FYN in an inactive form. Promotes CD28-induced phosphorylation of VAV1. In mast cells, phosphorylates CLNK after activation of immunoglobulin epsilon receptor signaling. Can also promote CD244-mediated NK cell activation. This chain is Tyrosine-protein kinase Fyn (FYN), found in Homo sapiens (Human).